The sequence spans 20 residues: Tetracycline resistance leader peptide (20 aa).

The tract at residues 1–20 (MKCNKMNRVQLKEGSVSMTL) is disordered.

The protein is Tetracycline resistance leader peptide (tetL) of Bacillus subtilis (strain 168).